The chain runs to 175 residues: Probable S-adenosyl-L-methionine-binding protein VirR (175 aa).

Residues 35 to 165 (LFFVGKIRTP…DRSLSKPLAP (131 aa)) form the TsaA-like domain. Residues 52–54 (PRQ), 90–91 (HE), R114, T124, and 145–148 (LDGT) contribute to the S-adenosyl-L-methionine site.

This sequence belongs to the tRNA methyltransferase O family.

This is Probable S-adenosyl-L-methionine-binding protein VirR (virR) from Rhizobium radiobacter (Agrobacterium tumefaciens).